The following is a 124-amino-acid chain: Astakine (124 aa).

The signal sequence occupies residues 1–21; the sequence is MAVSSAVRMLSVACLVVSAAG. 5 disulfide bridges follow: Cys28-Cys40, Cys34-Cys52, Cys39-Cys91, Cys62-Cys99, and Cys93-Cys106.

The protein belongs to the AVIT (prokineticin) family.

The protein localises to the secreted. Cytokine directly involved in hematopoiesis. This Penaeus monodon (Giant tiger prawn) protein is Astakine.